We begin with the raw amino-acid sequence, 90 residues long: Large ribosomal subunit protein eL31 (90 aa).

It belongs to the eukaryotic ribosomal protein eL31 family.

This is Large ribosomal subunit protein eL31 from Thermococcus gammatolerans (strain DSM 15229 / JCM 11827 / EJ3).